The following is a 353-amino-acid chain: ATPase GET3 (353 aa).

26–33 is an ATP binding site; it reads KGGVGKTT. The active site involves aspartate 57. The ATP site is built by glutamate 244 and asparagine 271. Zn(2+) is bound by residues cysteine 284 and cysteine 287.

The protein belongs to the arsA ATPase family. In terms of assembly, homodimer. Component of the Golgi to ER traffic (GET) complex, which is composed of GET1, GET2 and GET3. Within the complex, GET1 and GET2 form a heterotetramer which is stabilized by phosphatidylinositol binding and which binds to the GET3 homodimer. Interacts with the chloride channel protein GEF1.

The protein resides in the cytoplasm. Its subcellular location is the endoplasmic reticulum. It is found in the golgi apparatus. Functionally, ATPase required for the post-translational delivery of tail-anchored (TA) proteins to the endoplasmic reticulum. Recognizes and selectively binds the transmembrane domain of TA proteins in the cytosol. This complex then targets to the endoplasmic reticulum by membrane-bound receptors GET1 and GET2, where the tail-anchored protein is released for insertion. This process is regulated by ATP binding and hydrolysis. ATP binding drives the homodimer towards the closed dimer state, facilitating recognition of newly synthesized TA membrane proteins. ATP hydrolysis is required for insertion. Subsequently, the homodimer reverts towards the open dimer state, lowering its affinity for the GET1-GET2 receptor, and returning it to the cytosol to initiate a new round of targeting. Cooperates with the HDEL receptor ERD2 to mediate the ATP-dependent retrieval of resident ER proteins that contain a C-terminal H-D-E-L retention signal from the Golgi to the ER. Involved in low-level resistance to the oxyanions arsenite and arsenate, and in heat tolerance. This Zygosaccharomyces rouxii (strain ATCC 2623 / CBS 732 / NBRC 1130 / NCYC 568 / NRRL Y-229) protein is ATPase GET3.